Consider the following 163-residue polypeptide: Mating-type protein ALPHA2 (163 aa).

Residues 80–142 (IEKRSKRFPK…NRRRKERTLT (63 aa)) constitute a DNA-binding region (homeobox; TALE-type).

This sequence belongs to the TALE/M-ATYP homeobox family.

Its subcellular location is the nucleus. Its function is as follows. Mating type proteins are sequence specific DNA-binding proteins that act as master switches in yeast differentiation by controlling gene expression in a cell type-specific fashion. This is Mating-type protein ALPHA2 (MATALPHA2) from Pichia angusta (Yeast).